We begin with the raw amino-acid sequence, 545 residues long: Arginine-containing cyclodipeptide synthase ateA (545 aa).

Over residues 390 to 425 the composition is skewed to polar residues; the sequence is GNQQTPTQSADMDSTVSHRQQQPASSRSYTSKQNQM. The segment at 390 to 433 is disordered; sequence GNQQTPTQSADMDSTVSHRQQQPASSRSYTSKQNQMPRPLVISV. The short motif at 434–438 is the Conserved DDXXE motif element; the sequence is DDPSE.

Belongs to the arginine-containing cyclodipeptide synthase family.

The catalysed reaction is L-glutamyl-tRNA(Glu) + L-arginyl-tRNA(Arg) = cyclo(L-arginyl-L-glutamyl) + tRNA(Glu) + tRNA(Arg) + 2 H(+). The protein operates within secondary metabolite biosynthesis. Arginine-containing cyclodipeptide synthase; part of the cluster that mediates the biosynthesis of a highly modified cyclo-arginine-glutamate dipeptide (cRE). Within the pathway, ateA acts as the scaffold-generating enzyme and is responsible for formation of the cyclo-Arg-Glu diketopiperazine (cRW) from L-arginyl-tRNA(Arg) + L-glutamyl-tRNA(Glu). Additional enzymes from the cluster then further modify the cyclo-Arg-Glu diketopiperazine (cRW) scaffold. This chain is Arginine-containing cyclodipeptide synthase ateA, found in Aspergillus terreus.